Reading from the N-terminus, the 119-residue chain is Protein yippee-like 3 (119 aa).

Residues 19-116 (RRYSCVHCRA…IELSHMIKDN (98 aa)) form the Yippee domain. Zn(2+) is bound by residues C23, C26, C79, and C82.

This sequence belongs to the yippee family.

The protein resides in the nucleus. It is found in the nucleolus. May be involved in proliferation and apoptosis in myeloid precursor cells. The polypeptide is Protein yippee-like 3 (ypel3) (Danio rerio (Zebrafish)).